We begin with the raw amino-acid sequence, 387 residues long: GTPase Obg (387 aa).

The region spanning 1 to 159 is the Obg domain; the sequence is MKFVDEAVIR…RSLRLELMLL (159 aa). The OBG-type G domain occupies 160–333; it reads ADVGLLGMPN…LALKLMDFID (174 aa). GTP contacts are provided by residues 166 to 173, 191 to 195, 213 to 216, 283 to 286, and 314 to 316; these read GMPNAGKS, FTTLV, DIPG, NKTD, and SAY. The Mg(2+) site is built by serine 173 and threonine 193.

The protein belongs to the TRAFAC class OBG-HflX-like GTPase superfamily. OBG GTPase family. Monomer. Requires Mg(2+) as cofactor.

It localises to the cytoplasm. Functionally, an essential GTPase which binds GTP, GDP and possibly (p)ppGpp with moderate affinity, with high nucleotide exchange rates and a fairly low GTP hydrolysis rate. Plays a role in control of the cell cycle, stress response, ribosome biogenesis and in those bacteria that undergo differentiation, in morphogenesis control. The polypeptide is GTPase Obg (Shewanella loihica (strain ATCC BAA-1088 / PV-4)).